We begin with the raw amino-acid sequence, 35 residues long: GIKEMLCNMACAQTVCKKSGGPLCDTCQAACKALG.

Residues Met-5 and Met-9 each carry the methionine sulfoxide modification. Intrachain disulfides connect Cys-7/Cys-31, Cys-11/Cys-27, and Cys-16/Cys-24. A Glycine amide modification is found at Gly-35.

Oxidation likely reduces antimicrobial activity against Gram-positive bacteria and Gram-negative bacteria.

Its subcellular location is the secreted. Its function is as follows. Has antimicrobial activity against Gram-positive bacteria (C.glutamicum ATCC 13032 (MIC=1.6 uM) and B.subtilis ATCC 23857 (MIC=1.6 uM)) and Gram-negative bacteria (E.coli ATCC 25922 (MIC=12.5 uM) and P.aeruginosa ATCC 27853 (MIC=25.0 uM)). Displays very low activity against the Gram-positive bacteria S.aureus ATCC 9144 (MIC&gt;100 uM). This chain is Turgencin-B, found in Synoicum turgens (Colonial ascidian).